Reading from the N-terminus, the 629-residue chain is tRNA uridine 5-carboxymethylaminomethyl modification enzyme MnmG (629 aa).

FAD-binding positions include 13-18, V125, and S180; that span reads GGGHAG. 273-287 serves as a coordination point for NAD(+); sequence GPRYCPSIEDKVMRF. FAD is bound at residue Q370.

Belongs to the MnmG family. In terms of assembly, homodimer. Heterotetramer of two MnmE and two MnmG subunits. Requires FAD as cofactor.

Its subcellular location is the cytoplasm. Its function is as follows. NAD-binding protein involved in the addition of a carboxymethylaminomethyl (cmnm) group at the wobble position (U34) of certain tRNAs, forming tRNA-cmnm(5)s(2)U34. The protein is tRNA uridine 5-carboxymethylaminomethyl modification enzyme MnmG of Salmonella dublin (strain CT_02021853).